Here is a 1304-residue protein sequence, read N- to C-terminus: NAD-dependent protein deacetylase Sir2B (1304 aa).

The Deacetylase sirtuin-type domain occupies 28–466 (TEEEKKKVKE…LISIHNIKMK (439 aa)). NAD(+)-binding positions include 53–72 (GAGI…TGIW) and 274–277 (QNID). The active-site Proton acceptor is the His-294. Residues Cys-302, Cys-305, Cys-327, and Cys-330 each contribute to the Zn(2+) site. Residues 371 to 373 (GSS), 399 to 401 (NYQ), and Val-417 each bind NAD(+). 3 disordered regions span residues 545-585 (EHNN…SSSI), 749-827 (KVKS…DKDN), and 1154-1203 (EIKY…DDNN). Low complexity-rich tracts occupy residues 548–585 (NNNN…SSSI), 756–806 (NNNN…ISDH), and 1182–1203 (DDNN…DDNN).

This sequence belongs to the sirtuin family. Class IV subfamily. The cofactor is Zn(2+).

It catalyses the reaction N(6)-acetyl-L-lysyl-[protein] + NAD(+) + H2O = 2''-O-acetyl-ADP-D-ribose + nicotinamide + L-lysyl-[protein]. Its function is as follows. Regulates the expression of the surface antigen-coding var genes central to the malaria pathogenesis. Cooperates with Sir2A to mediate silencing and mutual exclusive expression of only 1 of the 60 subtelomeric var genes at a time, coding for functionally different but epitopically variant versions of the erythrocyte membrane protein 1 (PfEMP1) molecule, to evade the detection by host immune surveillance. The protein is NAD-dependent protein deacetylase Sir2B of Plasmodium falciparum (isolate 3D7).